We begin with the raw amino-acid sequence, 252 residues long: 5'-nucleotidase SurE (252 aa).

Residues D8, D9, S39, and N91 each coordinate a divalent metal cation.

This sequence belongs to the SurE nucleotidase family. Requires a divalent metal cation as cofactor.

The protein resides in the cytoplasm. The enzyme catalyses a ribonucleoside 5'-phosphate + H2O = a ribonucleoside + phosphate. Functionally, nucleotidase that shows phosphatase activity on nucleoside 5'-monophosphates. The chain is 5'-nucleotidase SurE from Gemmatimonas aurantiaca (strain DSM 14586 / JCM 11422 / NBRC 100505 / T-27).